The chain runs to 637 residues: Protein arginine N-methyltransferase 5 (637 aa).

Position 2 is an N-acetylalanine (alanine 2). The segment at 13–292 (RVSSGRDLNC…YLEYLSQNRP (280 aa)) is TIM barrel. The SAM-dependent MTase PRMT-type domain occupies 308 to 615 (LQSPLQPLMD…SNSKKVWYEW (308 aa)). S-adenosyl-L-methionine is bound at residue tyrosine 324. An a protein-binding site is contributed by phenylalanine 327. S-adenosyl-L-methionine is bound by residues 333 to 334 (KY), glutamate 392, and 419 to 420 (DM). Glutamate 435 and glutamate 444 together coordinate a protein. Active-site proton donor/acceptor residues include glutamate 435 and glutamate 444. Residues 465–637 (PGEYTSFLAP…PTGRSYTIGL (173 aa)) are beta barrel. The dimerization stretch occupies residues 488-494 (REKDRDP).

This sequence belongs to the class I-like SAM-binding methyltransferase superfamily. Protein arginine N-methyltransferase family. Forms, at least, homodimers and homotetramers. Component of the methylosome complex, composed of PRMT5, WDR77 and CLNS1A. Found in a complex composed of PRMT5, WDR77 and RIOK1. RIOK1 and CLNS1A associate with PRMT5 in a mutually exclusive fashion, which allows the recruitment of distinct methylation substrates, such as nucleolin/NCL and Sm proteins, respectively. Interacts with PRDM1. Identified in a complex composed of methylosome and PRMT1 and ERH. Interacts with EGFR; methylates EGFR and stimulates EGFR-mediated ERK activation. Interacts with HOXA9. Interacts with SRGAP2. Found in a complex with COPRS, RUNX1 and CBFB. Interacts with CHTOP; the interaction symmetrically methylates CHTOP, but seems to require the presence of PRMT1. Interacts with EPB41L3; this modulates methylation of target proteins. Component of a high molecular weight E2F-pocket protein complex, CERC (cyclin E1 repressor complex). Associates with SWI/SNF remodeling complexes containing SMARCA2 and SMARCA4. Interacts with JAK2, SSTR1, SUPT5H, BRAF and with active RAF1. Interacts with LSM11, PRMT7 and SNRPD3. Interacts with COPRS; promoting its recruitment on histone H4. Interacts with CLNS1A/pICln. Identified in a complex with CLNS1A/pICln and Sm proteins. Interacts with RPS10. Interacts with WDR77. Interacts with IWS1. Interacts with CRY1. Interacts with POLR2A. Interacts with SMN1/SMN2. Interacts with LYAR; this interaction is direct. Interacts with TTC5/STRAP; this interaction is DNA damage-dependent and promotes PRMT5 interaction with p53/TP53. Interacts with p53/TP53 in response to DNA damage; the interaction is TTC5/STRAP dependent. Interacts with FAM47E; the interaction is direct, promotes PRMT5 localization to chromatin, and does not disrupt its association with WDR77 or STUB1. Interacts with TDRD6. Interacts with STUB1. Interacts with MBD2. Does not interact with MBD3.

The protein localises to the cytoplasm. It is found in the nucleus. The protein resides in the golgi apparatus. It carries out the reaction L-arginyl-[protein] + 2 S-adenosyl-L-methionine = N(omega),N(omega)'-dimethyl-L-arginyl-[protein] + 2 S-adenosyl-L-homocysteine + 2 H(+). With respect to regulation, activity is increased by EGF, HGF, FGF1 or FGF2 treatments, and slightly decreased by NGF treatment. Arginine methyltransferase that can both catalyze the formation of omega-N monomethylarginine (MMA) and symmetrical dimethylarginine (sDMA), with a preference for the formation of MMA. Specifically mediates the symmetrical dimethylation of arginine residues in the small nuclear ribonucleoproteins Sm D1 (SNRPD1) and Sm D3 (SNRPD3); such methylation being required for the assembly and biogenesis of snRNP core particles. Methylates SUPT5H and may regulate its transcriptional elongation properties. May methylate the N-terminal region of MBD2. Mono- and dimethylates arginine residues of myelin basic protein (MBP) in vitro. May play a role in cytokine-activated transduction pathways. Negatively regulates cyclin E1 promoter activity and cellular proliferation. Methylates histone H2A and H4 'Arg-3' during germ cell development. Methylates histone H3 'Arg-8', which may repress transcription. Methylates the Piwi proteins (PIWIL1, PIWIL2 and PIWIL4), methylation of Piwi proteins being required for the interaction with Tudor domain-containing proteins and subsequent localization to the meiotic nuage. Methylates RPS10. Attenuates EGF signaling through the MAPK1/MAPK3 pathway acting at 2 levels. First, monomethylates EGFR; this enhances EGFR 'Tyr-1197' phosphorylation and PTPN6 recruitment, eventually leading to reduced SOS1 phosphorylation. Second, methylates RAF1 and probably BRAF, hence destabilizing these 2 signaling proteins and reducing their catalytic activity. Required for induction of E-selectin and VCAM-1, on the endothelial cells surface at sites of inflammation. Methylates HOXA9. Methylates and regulates SRGAP2 which is involved in cell migration and differentiation. Acts as a transcriptional corepressor in CRY1-mediated repression of the core circadian component PER1 by regulating the H4R3 dimethylation at the PER1 promoter. Methylates GM130/GOLGA2, regulating Golgi ribbon formation. Methylates H4R3 in genes involved in glioblastomagenesis in a CHTOP- and/or TET1-dependent manner. Symmetrically methylates POLR2A, a modification that allows the recruitment to POLR2A of proteins including SMN1/SMN2 and SETX. This is required for resolving RNA-DNA hybrids created by RNA polymerase II, that form R-loop in transcription terminal regions, an important step in proper transcription termination. Along with LYAR, binds the promoter of gamma-globin HBG1/HBG2 and represses its expression. Symmetrically methylates NCL. Methylates p53/TP53; methylation might possibly affect p53/TP53 target gene specificity. Involved in spliceosome maturation and mRNA splicing in prophase I spermatocytes through the catalysis of the symmetrical arginine dimethylation of SNRPB (small nuclear ribonucleoprotein-associated protein) and the interaction with tudor domain-containing protein TDRD6. This chain is Protein arginine N-methyltransferase 5 (PRMT5), found in Bos taurus (Bovine).